Consider the following 143-residue polypeptide: ATP synthase subunit b' (143 aa).

The chain crosses the membrane as a helical span at residues 6 to 26 (ATLPLMALQFVVLAFLLNAIF).

The protein belongs to the ATPase B chain family. F-type ATPases have 2 components, F(1) - the catalytic core - and F(0) - the membrane proton channel. F(1) has five subunits: alpha(3), beta(3), gamma(1), delta(1), epsilon(1). F(0) has four main subunits: a(1), b(1), b'(1) and c(10-14). The alpha and beta chains form an alternating ring which encloses part of the gamma chain. F(1) is attached to F(0) by a central stalk formed by the gamma and epsilon chains, while a peripheral stalk is formed by the delta, b and b' chains.

Its subcellular location is the cellular thylakoid membrane. Its function is as follows. F(1)F(0) ATP synthase produces ATP from ADP in the presence of a proton or sodium gradient. F-type ATPases consist of two structural domains, F(1) containing the extramembraneous catalytic core and F(0) containing the membrane proton channel, linked together by a central stalk and a peripheral stalk. During catalysis, ATP synthesis in the catalytic domain of F(1) is coupled via a rotary mechanism of the central stalk subunits to proton translocation. Component of the F(0) channel, it forms part of the peripheral stalk, linking F(1) to F(0). The b'-subunit is a diverged and duplicated form of b found in plants and photosynthetic bacteria. The sequence is that of ATP synthase subunit b' from Synechocystis sp. (strain ATCC 27184 / PCC 6803 / Kazusa).